Here is a 129-residue protein sequence, read N- to C-terminus: Large ribosomal subunit protein bL19 (129 aa).

The protein belongs to the bacterial ribosomal protein bL19 family.

This protein is located at the 30S-50S ribosomal subunit interface and may play a role in the structure and function of the aminoacyl-tRNA binding site. This chain is Large ribosomal subunit protein bL19, found in Bordetella avium (strain 197N).